We begin with the raw amino-acid sequence, 174 residues long: Large ribosomal subunit protein uL10 (174 aa).

This sequence belongs to the universal ribosomal protein uL10 family. Part of the ribosomal stalk of the 50S ribosomal subunit. The N-terminus interacts with L11 and the large rRNA to form the base of the stalk. The C-terminus forms an elongated spine to which L12 dimers bind in a sequential fashion forming a multimeric L10(L12)X complex.

Functionally, forms part of the ribosomal stalk, playing a central role in the interaction of the ribosome with GTP-bound translation factors. The polypeptide is Large ribosomal subunit protein uL10 (Geobacter sulfurreducens (strain ATCC 51573 / DSM 12127 / PCA)).